The primary structure comprises 75 residues: Penaeidin-3m (75 aa).

The first 19 residues, 1 to 19 (MRLVVCLVFLASFALVCQG), serve as a signal peptide directing secretion. Pyrrolidone carboxylic acid is present on Q20. Disulfide bonds link C44–C59, C48–C66, and C60–C67. S74 bears the Serine amide mark.

It belongs to the penaeidin family.

It is found in the cytoplasmic granule. Antibacterial and antifungal activity. Presents chitin-binding activity. The chain is Penaeidin-3m from Penaeus setiferus (Atlantic white shrimp).